Reading from the N-terminus, the 348-residue chain is Putative olfactory receptor 3A4 (348 aa).

Topologically, residues 1–28 (MDLGNSGNDSVVTKFVLLGLTETAALQP) are extracellular. An N-linked (GlcNAc...) asparagine glycan is attached at N8. A helical transmembrane segment spans residues 29–52 (ILFVIFLLAYVTTIGGTLSILAAI). The Cytoplasmic portion of the chain corresponds to 53-60 (LMETKLHS). A helical transmembrane segment spans residues 61 to 82 (PMYFFLGNLSLPDVGCVSVTVP). The Extracellular portion of the chain corresponds to 83–103 (AMLSHFISNDRSIPYKACLSE). C100 and C192 are oxidised to a cystine. A helical transmembrane segment spans residues 104 to 123 (LFFFHLLAGADCFLLTIMAY). Topologically, residues 124 to 143 (DRYLAICQSLTYSSRMSWGI) are cytoplasmic. Residues 144-161 (QQALVGMSCVFSFTNALT) traverse the membrane as a helical segment. Over 162–199 (QTVALSPLNFCGPNVINHFYCDLPQPFQLSCSSVHLNG) the chain is Extracellular. A helical transmembrane segment spans residues 200–222 (QLLFVAAAFMGVAPLVLITVSYA). The Cytoplasmic portion of the chain corresponds to 223–239 (HVAAAVLRIRSAEGRKK). The chain crosses the membrane as a helical span at residues 240–262 (AFSTCSSHLTVVGIFYGTGVFSY). The Extracellular segment spans residues 263–275 (TRLGSVESSDKDK). Residues 276–295 (GIGILNTVISPMLNPLIYWT) form a helical membrane-spanning segment. The Cytoplasmic portion of the chain corresponds to 296 to 348 (SLLDVGCISHCSSDAGVSPGPPVQSSLCCLQFTALLSPPPGWGGLSPLNSHGL).

It belongs to the G-protein coupled receptor 1 family.

Its subcellular location is the cell membrane. Its function is as follows. Odorant receptor. The chain is Putative olfactory receptor 3A4 (OR3A4P) from Homo sapiens (Human).